We begin with the raw amino-acid sequence, 590 residues long: Nuclear receptor subfamily 2 group C member 1 (590 aa).

Residues 1 to 166 are required for interaction with KAT2B; the sequence is MATIEEIAHQ…RLQRCIAFGM (166 aa). A DNA-binding region (nuclear receptor) is located at residues 98–173; that stretch reads FDLCVVCGDK…FGMKQDSVQC (76 aa). 2 consecutive NR C4-type zinc fingers follow at residues 101–121 and 137–156; these read CVVCGDKASGRHYGAITCEGC and CRGSKDCVINKHHRNRCQYC. S185 and S203 each carry phosphoserine. T208 carries the post-translational modification Phosphothreonine. A Phosphothreonine; by MAPK1 modification is found at T210. K238 is covalently cross-linked (Glycyl lysine isopeptide (Lys-Gly) (interchain with G-Cter in SUMO); alternate). K238 is covalently cross-linked (Glycyl lysine isopeptide (Lys-Gly) (interchain with G-Cter in SUMO2); alternate). The NR LBD domain maps to 333-577; sequence EGMEGSPHLI…SVIPHILKME (245 aa). S461 and S568 each carry phosphoserine; by PKC. The tract at residues 571-590 is required for interaction with NRIP1; it reads PHILKMEPADYNSQIIGHSL. K575 participates in a covalent cross-link: Glycyl lysine isopeptide (Lys-Gly) (interchain with G-Cter in SUMO2).

This sequence belongs to the nuclear hormone receptor family. NR2 subfamily. As to quaternary structure, homodimer. Heterodimer; with NR2C2 which is required for chromatin remodeling and for binding to promoter regions such as globin DR1 repeats. Interacts with ESR1; the interaction prevents homodimerization of ESR1 and suppresses its transcriptional activity and cell growth. Interacts with NRIP1 (via its LXXLL motifs); the interaction provides corepressor activity. Interacts with HDAC3 (via the DNA-binding domain); the interaction recruits phosphorylated NR2C1 to PML bodies for sumoylation. Interacts with HDAC4 (via the DNA-binding domain). Interacts with PIAS1; the interaction is required for sumoylation of NR2C1. Interacts with UBE2I; the interaction is required for sumoylation of NR2C1. Interacts with KAT2B; the interaction acts as a corepressor of gene expression. Sumoylation requires both PIAS1 and UBE2I. Sumoylation appears to dissociate NR2C1 from the PML nuclear bodies. Enhances the interaction with NRIP1 but inhibits interaction with KAT2B. In proliferating cells, stimulation by all-trans retinoic acid, activation of MAPK1-mediated phosphorylation and recruitment to PML bodies with subsequent sumoylation, suppresses OCT4 expression. In terms of processing, phosphorylated on several serine and threonine residues. Phosphorylation on Thr-210, stimulated by all-trans retinoic acid (atRA) mediates PML location and sumoylation in proliferating cells which then modulates its association with effector molecules, KAT2B and NRIP1. Phosphorylation on Ser-568 by PKC is important for protein stability and function as activator of RARB. Isoform 1 is highly expressed in the adlumenal compartment of the seminiferous tubule of adult testes (at protein level) and in the eyes of newborn animals. Weakly expressed in other adult organs including the seminal vesicle, prostate, ovary, adrenal gland, heart, thymus, placenta and brain. Expressed during embryonic stages in developing eyes, brain and cartilage primordia (at protein level). Also expressed in the developing spinal motor neurons and in the sympathetic-, parasympathetic- and sensory ganglia of the embryonic PNS. Expressed in the developing neural epithelia of the inner ear, nasal cavity, tongue and retina. At day 16.5, expressed in various tissues including kidney and intestine. In contrast, isoform 2 is widely expressed at a low level throughout the adult testis.

It is found in the nucleus. It localises to the PML body. Orphan nuclear receptor. Binds the IR7 element in the promoter of its own gene in an autoregulatory negative feedback mechanism. Primarily repressor of a broad range of genes including ESR1 and RARB. Together with NR2C2, forms the core of the DRED (direct repeat erythroid-definitive) complex that represses embryonic and fetal globin transcription. Binds to hormone response elements (HREs) consisting of two 5'-AGGTCA-3' half site direct repeat consensus sequences. Also activator of OCT4 gene expression. Plays a fundamental role in early embryogenesis and regulates embryonic stem cell proliferation and differentiation. Mediator of retinoic acid-regulated preadipocyte proliferation. This is Nuclear receptor subfamily 2 group C member 1 from Mus musculus (Mouse).